The following is a 313-amino-acid chain: Ribose 1,5-bisphosphate isomerase (313 aa).

Substrate is bound by residues arginine 17 to alanine 20 and arginine 57. Cysteine 121 (proton acceptor) is an active-site residue. Aspartate 190 acts as the Proton donor in catalysis. Substrate contacts are provided by residues asparagine 200–lysine 201 and lysine 226.

Belongs to the eIF-2B alpha/beta/delta subunits family. R15P isomerase subfamily.

The catalysed reaction is alpha-D-ribose 1,5-bisphosphate = D-ribulose 1,5-bisphosphate. Catalyzes the isomerization of ribose 1,5-bisphosphate (R15P) to ribulose 1,5-bisphosphate (RuBP), the CO(2) acceptor and substrate for RubisCO. Functions in an archaeal AMP degradation pathway, together with AMP phosphorylase and RubisCO. The chain is Ribose 1,5-bisphosphate isomerase from Archaeoglobus fulgidus (strain ATCC 49558 / DSM 4304 / JCM 9628 / NBRC 100126 / VC-16).